The primary structure comprises 320 residues: tRNA-cytidine(32) 2-sulfurtransferase (320 aa).

Positions 54-59 (SGGKDS) match the PP-loop motif motif. Cys129, Cys132, and Cys220 together coordinate [4Fe-4S] cluster.

It belongs to the TtcA family. As to quaternary structure, homodimer. Mg(2+) serves as cofactor. The cofactor is [4Fe-4S] cluster.

It localises to the cytoplasm. The enzyme catalyses cytidine(32) in tRNA + S-sulfanyl-L-cysteinyl-[cysteine desulfurase] + AH2 + ATP = 2-thiocytidine(32) in tRNA + L-cysteinyl-[cysteine desulfurase] + A + AMP + diphosphate + H(+). The protein operates within tRNA modification. Its function is as follows. Catalyzes the ATP-dependent 2-thiolation of cytidine in position 32 of tRNA, to form 2-thiocytidine (s(2)C32). The sulfur atoms are provided by the cysteine/cysteine desulfurase (IscS) system. This chain is tRNA-cytidine(32) 2-sulfurtransferase, found in Bordetella pertussis (strain Tohama I / ATCC BAA-589 / NCTC 13251).